Reading from the N-terminus, the 122-residue chain is Large ribosomal subunit protein uL14 (122 aa).

This sequence belongs to the universal ribosomal protein uL14 family. As to quaternary structure, part of the 50S ribosomal subunit. Forms a cluster with proteins L3 and L19. In the 70S ribosome, L14 and L19 interact and together make contacts with the 16S rRNA in bridges B5 and B8.

Its function is as follows. Binds to 23S rRNA. Forms part of two intersubunit bridges in the 70S ribosome. The sequence is that of Large ribosomal subunit protein uL14 from Rhodospirillum centenum (strain ATCC 51521 / SW).